A 301-amino-acid chain; its full sequence is UDP-N-acetylenolpyruvoylglucosamine reductase (301 aa).

The FAD-binding PCMH-type domain occupies 30–194 (VGGEADYLVF…LSVKFALAPG (165 aa)). Arg173 is a catalytic residue. The Proton donor role is filled by Ser223. The active site involves Glu293.

This sequence belongs to the MurB family. FAD serves as cofactor.

The protein resides in the cytoplasm. The catalysed reaction is UDP-N-acetyl-alpha-D-muramate + NADP(+) = UDP-N-acetyl-3-O-(1-carboxyvinyl)-alpha-D-glucosamine + NADPH + H(+). The protein operates within cell wall biogenesis; peptidoglycan biosynthesis. Cell wall formation. In Streptococcus pneumoniae (strain Hungary19A-6), this protein is UDP-N-acetylenolpyruvoylglucosamine reductase.